The primary structure comprises 444 residues: Trigger factor (444 aa).

Positions 165-250 (GDFAKFDFEG…LHEIQELKIP (86 aa)) constitute a PPIase FKBP-type domain.

This sequence belongs to the FKBP-type PPIase family. Tig subfamily.

It localises to the cytoplasm. It carries out the reaction [protein]-peptidylproline (omega=180) = [protein]-peptidylproline (omega=0). Functionally, involved in protein export. Acts as a chaperone by maintaining the newly synthesized protein in an open conformation. Functions as a peptidyl-prolyl cis-trans isomerase. The chain is Trigger factor (tig) from Campylobacter jejuni subsp. jejuni serotype O:2 (strain ATCC 700819 / NCTC 11168).